The chain runs to 215 residues: C' protein (215 aa).

The interval Met-12–Arg-34 is disordered. The involved in self-degradation and in host STAT1 degradation stretch occupies residues Phe-15–Leu-22.

This sequence belongs to the respirovirus protein C family. The different isoforms interact (via C-terminus) with unphosphorylated and phosphorylated human STAT1 (via N-terminus), favoring the formation of parallel STAT1 homodimers. The different isoforms do not interact with host STAT2. C protein interacts with L protein; this interaction has an inhibitory effect on viral transcription and replication. In terms of processing, Y1 and Y2 proteins are produced not only by alternative initiation, but also by proteolytic cleavage of C'. Only alternative initiation is detected in vitro, whereas in vivo cleavage seems to be predominant.

It is found in the host cytoplasm. Its subcellular location is the virion. The different isoforms prevent the establishment of cellular antiviral state by blocking the interferon-alpha/beta (IFN-alpha/beta) and IFN-gamma signaling pathways. They inhibit IFN-alpha/beta induced tyrosine phosphorylation of STAT1 and STAT2. Blocking the IFN-alpha/beta pathway requires binding to STAT1 in the cytoplasm. They inhibit IFN-gamma induced serine phosphorylation of STAT1. Block the IFN-gamma pathway by binding to and stabilizing the parallel form of the STAT1 dimer, further inducing high-molecular-weight complex (HMWC) formation and inhibition of transcription by IFN-gamma. May also have a role in preventing the cell to enter apoptosis. Modulate regulation of viral transcription and replication. Overexpression inhibits the viral RNA polymerase. The absence of all C', C, Y1 and Y2 proteins leads to viral delayed growth. Plays an important role in virion particles release. Modulates virion shape. In Sendai virus (strain Z) (SeV), this protein is C' protein (P/V/C).